We begin with the raw amino-acid sequence, 436 residues long: Tryptophan synthase beta chain (436 aa).

Lys-129 carries the post-translational modification N6-(pyridoxal phosphate)lysine.

Belongs to the TrpB family. As to quaternary structure, tetramer of two alpha and two beta chains. It depends on pyridoxal 5'-phosphate as a cofactor.

It catalyses the reaction (1S,2R)-1-C-(indol-3-yl)glycerol 3-phosphate + L-serine = D-glyceraldehyde 3-phosphate + L-tryptophan + H2O. It functions in the pathway amino-acid biosynthesis; L-tryptophan biosynthesis; L-tryptophan from chorismate: step 5/5. Its function is as follows. The beta subunit is responsible for the synthesis of L-tryptophan from indole and L-serine. The polypeptide is Tryptophan synthase beta chain (Prochlorococcus marinus (strain MIT 9313)).